Here is a 556-residue protein sequence, read N- to C-terminus: Vetispiradiene synthase 1 (556 aa).

The Mg(2+) site is built by Asp-309, Asp-313, Asp-452, Thr-456, and Glu-460. The short motif at 309-313 is the DDXXD motif element; that stretch reads DDTFD.

Belongs to the terpene synthase family. Tpsa subfamily. Requires Mg(2+) as cofactor.

The protein resides in the cytoplasm. The enzyme catalyses (2E,6E)-farnesyl diphosphate = (-)-vetispiradiene + diphosphate. Its pathway is secondary metabolite biosynthesis; terpenoid biosynthesis. Its function is as follows. Sesquiterpene synthase that catalyzes the formation of vetispiradiene from trans,trans-farnesyl diphosphate. The initial internal cyclization produces the monocyclic intermediate germacrene A. In Solanum tuberosum (Potato), this protein is Vetispiradiene synthase 1 (PVS1).